A 1056-amino-acid chain; its full sequence is Ribosomal protein S6 kinase delta-1 (1056 aa).

Residues 8–132 form the PX domain; it reads SADLARFYTV…DFFKGGVISD (125 aa). The segment at 204–223 is disordered; that stretch reads VGAVASDSEPSRVEDRESRS. Over residues 212–222 the composition is skewed to basic and acidic residues; sequence EPSRVEDRESR. One can recognise an MIT domain in the interval 276 to 304; that stretch reads VQGESSPTRREAVKRRTAEYLMRAESICS. 7 positions are modified to phosphoserine: S281, S422, S423, S426, S446, S448, and S454. One can recognise a Protein kinase 1 domain in the interval 343-444; the sequence is GVIDKVLLVM…SMPPRVCLQQ (102 aa). The interval 426-504 is disordered; that stretch reads SLDIKEGRPS…KWLDSGSSSE (79 aa). Positions 443–454 are enriched in low complexity; the sequence is QQPSASPQGGSS. Residues 473-482 are compositionally biased toward polar residues; that stretch reads TSLTPSSQDD. Residues S493 and S527 each carry the phosphoserine modification. Residues 529 to 588 are disordered; the sequence is SEESVMQPEGDKADTQAVSSPASLATGSVSPSTHLRVFSGGEDLEAVSSPPTSESLSRSK. The segment covering 544-561 has biased composition (polar residues); the sequence is QAVSSPASLATGSVSPST. A compositionally biased stretch (low complexity) spans 576–587; it reads SSPPTSESLSRS. Phosphoserine occurs at positions 577, 599, 602, 634, 655, 658, 661, and 787. The tract at residues 628-662 is disordered; sequence TLEDGDSPSQSLDPGESKRESEAQDSVSRGSDDSV. The 258-residue stretch at 789–1046 folds into the Protein kinase 2 domain; that stretch reads RSESDRLGQV…VEDIKSHPFF (258 aa). ATP is bound by residues 795–803 and K823; that span reads LGQVEVVVT. D919 functions as the Proton acceptor in the catalytic mechanism.

Belongs to the protein kinase superfamily. Ser/Thr protein kinase family. S6 kinase subfamily. As to quaternary structure, interacts with SPHK1 and phosphatidylinositol 3-phosphate. Interacts (via PX domain) with PRDX3.

Its subcellular location is the cytoplasm. The protein resides in the membrane. It is found in the early endosome. The enzyme catalyses L-seryl-[protein] + ATP = O-phospho-L-seryl-[protein] + ADP + H(+). The catalysed reaction is L-threonyl-[protein] + ATP = O-phospho-L-threonyl-[protein] + ADP + H(+). May be involved in transmitting sphingosine-1 phosphate (SPP)-mediated signaling into the cell. Plays a role in the recruitment of PRDX3 to early endosomes. This chain is Ribosomal protein S6 kinase delta-1 (Rps6kc1), found in Mus musculus (Mouse).